The chain runs to 435 residues: MGKEKTHINLVVIGHVDSGKSTTTGHLIYKLGGIDKRTIEKFEKESSEMGKGSFKYAWVLDKLKAERERGITIDIALWQFETPKYHYTVIDAPGHRDFIKNMITGTSQADVALLVVPADRFEGAFSKEGQTREHALLAFTLGVRQMIVGINKMDTCEYKQSRFDEIFNEVDGYLKKVGYNTEKIPFVAISGFVGDNMVERSDKMPWYKGKTLVEALDTMEPPKRPTDKPLRLPLQDVYKIGGVGTVPVGRVETGIIRPGMNVTFAPAGVTTEVKSVEMHHEQMPEAVPGDNVGFNVKNVSIKDIKRGFVASDAKNDPAKGCEDFTAQVIVLNHPGEIKNGYSPVVDCHTAHISCKFQTITAKMDKRSGKVLEENPKLIKSGDAALVVMQPLKPLCVEAFTDYPPLGRFAVRDMKQTVAVGVIKSVTKKEATSKKK.

Positions Lys-5–Thr-226 constitute a tr-type G domain. Residues Gly-14–Ser-21 are G1. Gly-14–Ser-21 is a binding site for GTP. The tract at residues Gly-70–Asp-74 is G2. Residues Asp-91 to Gly-94 are G3. Residues Asp-91–His-95 and Asn-151–Asp-154 contribute to the GTP site. The tract at residues Asn-151–Asp-154 is G4. The segment at Ser-190–Phe-192 is G5.

The protein belongs to the TRAFAC class translation factor GTPase superfamily. Classic translation factor GTPase family. EF-Tu/EF-1A subfamily.

The protein resides in the cytoplasm. This protein promotes the GTP-dependent binding of aminoacyl-tRNA to the A-site of ribosomes during protein biosynthesis. This chain is Elongation factor 1-alpha, found in Cryptosporidium parvum.